We begin with the raw amino-acid sequence, 720 residues long: Polyribonucleotide nucleotidyltransferase (720 aa).

The Mg(2+) site is built by D484 and D490. The region spanning 551-610 (PRMYKISIDPSKIGSVIGSGGKTIRSIIEQTNTTVDIENDGTVVIGATDEASAQKAIKII) is the KH domain. Residues 620–688 (GSVYTGKVTR…SQGRINLSRR (69 aa)) form the S1 motif domain. A disordered region spans residues 697–720 (PISRNRDSQPRRSGPFRPQDRSNS).

The protein belongs to the polyribonucleotide nucleotidyltransferase family. Mg(2+) serves as cofactor.

It localises to the cytoplasm. It carries out the reaction RNA(n+1) + phosphate = RNA(n) + a ribonucleoside 5'-diphosphate. Its function is as follows. Involved in mRNA degradation. Catalyzes the phosphorolysis of single-stranded polyribonucleotides processively in the 3'- to 5'-direction. This is Polyribonucleotide nucleotidyltransferase from Dehalococcoides mccartyi (strain ATCC BAA-2266 / KCTC 15142 / 195) (Dehalococcoides ethenogenes (strain 195)).